The chain runs to 475 residues: Ribulose bisphosphate carboxylase large chain (475 aa).

Positions 1-2 (MS) are excised as a propeptide. N-acetylproline is present on P3. K14 carries the N6,N6,N6-trimethyllysine modification. The substrate site is built by N123 and T173. The active-site Proton acceptor is the K175. K177 lines the substrate pocket. The Mg(2+) site is built by K201, D203, and E204. K201 is subject to N6-carboxylysine. The active-site Proton acceptor is the H294. Residues R295, H327, and S379 each contribute to the substrate site.

This sequence belongs to the RuBisCO large chain family. Type I subfamily. In terms of assembly, heterohexadecamer of 8 large chains and 8 small chains; disulfide-linked. The disulfide link is formed within the large subunit homodimers. Mg(2+) serves as cofactor. The disulfide bond which can form in the large chain dimeric partners within the hexadecamer appears to be associated with oxidative stress and protein turnover.

Its subcellular location is the plastid. It is found in the chloroplast. The enzyme catalyses 2 (2R)-3-phosphoglycerate + 2 H(+) = D-ribulose 1,5-bisphosphate + CO2 + H2O. The catalysed reaction is D-ribulose 1,5-bisphosphate + O2 = 2-phosphoglycolate + (2R)-3-phosphoglycerate + 2 H(+). In terms of biological role, ruBisCO catalyzes two reactions: the carboxylation of D-ribulose 1,5-bisphosphate, the primary event in carbon dioxide fixation, as well as the oxidative fragmentation of the pentose substrate in the photorespiration process. Both reactions occur simultaneously and in competition at the same active site. This chain is Ribulose bisphosphate carboxylase large chain (rbcL), found in Marchantia polymorpha (Common liverwort).